The following is a 552-amino-acid chain: Urocanate hydratase (552 aa).

NAD(+) is bound by residues 49 to 50 (GG), glutamine 127, 173 to 175 (GMG), aspartate 193, 239 to 240 (NA), 260 to 264 (QTSAH), 270 to 271 (YI), and tyrosine 319. Residue cysteine 407 is part of the active site. An NAD(+)-binding site is contributed by glycine 489.

This sequence belongs to the urocanase family. The cofactor is NAD(+).

Its subcellular location is the cytoplasm. The enzyme catalyses 4-imidazolone-5-propanoate = trans-urocanate + H2O. It functions in the pathway amino-acid degradation; L-histidine degradation into L-glutamate; N-formimidoyl-L-glutamate from L-histidine: step 2/3. Catalyzes the conversion of urocanate to 4-imidazolone-5-propionate. This is Urocanate hydratase from Bacillus thuringiensis (strain Al Hakam).